We begin with the raw amino-acid sequence, 139 residues long: Histone H2AX (139 aa).

2 disordered regions span residues 1–21 (MSGRGKAVSKTRAKAKTRSSR) and 119–139 (KKSSGGVSTSGKKSSQQSQEY). N-acetylserine is present on Ser-2. At Ser-2 the chain carries Phosphoserine. Basic residues predominate over residues 7–19 (AVSKTRAKAKTRS). Lys-10 bears the N6-lactoyllysine; alternate mark. Residues Lys-14, Lys-16, and Lys-120 each participate in a glycyl lysine isopeptide (Lys-Gly) (interchain with G-Cter in ubiquitin) cross-link. A Phosphoserine modification is found at Ser-136. The [ST]-Q motif signature appears at 136-137 (SQ). Tyr-139 is subject to Phosphotyrosine; by WSTF.

Belongs to the histone H2A family. The nucleosome is a histone octamer containing two molecules each of H2A, H2B, H3 and H4 assembled in one H3-H4 heterotetramer and two H2A-H2B heterodimers. The octamer wraps approximately 147 bp of DNA. Interacts with numerous proteins required for DNA damage signaling and repair when phosphorylated on Ser-136. Phosphorylated. Phosphorylation of Ser-136 (H2AX139ph) occurs in response to DNA double strand breaks (DSBs) generated by exogenous genotoxic agents, by stalled replication forks and by meiotic recombination events. Phosphorylation is dependent on the DNA damage checkpoint kinases ATR and ATM, spreads on either side of a detected DSB site and may mark the surrounding chromatin for recruitment of proteins required for DNA damage signaling and repair. Widespread phosphorylation may also serve to amplify the damage signal or aid repair of persistent lesions. Dephosphorylation of Ser-136 is required for DNA DSB repair. Phosphorylation at Tyr-139 (H2AXY142ph) by baz1b/wstf determines the relative recruitment of either DNA repair or pro-apoptotic factors. Phosphorylation at Tyr-139 (H2AXY142ph) favors the recruitment of pro-apoptosis factors. In contrast, dephosphorylation of Tyr-139 by EYA proteins (eya1, eya2, eya3 or eya4) favors the recruitment of MDC1-containing DNA repair complexes to the tail of phosphorylated Ser-136 (H2AX139ph). Phosphorylated by VRK1. In terms of processing, monoubiquitination of Lys-120 (H2AXK119ub) by ring1 and rnf2/ring2 complex gives a specific tag for epigenetic transcriptional repression. Following DNA double-strand breaks (DSBs), it is ubiquitinated through 'Lys-63' linkage of ubiquitin moieties by the E2 ligase ube2n and the E3 ligases rnf8 and rnf168, leading to the recruitment of repair proteins to sites of DNA damage. Ubiquitination at Lys-14 and Lys-16 (H2AK13Ub and H2AK15Ub, respectively) in response to DNA damage is initiated by rnf168 that mediates monoubiquitination at these 2 sites, and 'Lys-63'-linked ubiquitin are then conjugated to monoubiquitin; rnf8 is able to extend 'Lys-63'-linked ubiquitin chains in vitro. H2AK119Ub and ionizing radiation-induced 'Lys-63'-linked ubiquitination (H2AK13Ub and H2AK15Ub) are distinct events.

Its subcellular location is the nucleus. It is found in the chromosome. Functionally, variant histone H2A which replaces conventional H2A in a subset of nucleosomes. Nucleosomes wrap and compact DNA into chromatin, limiting DNA accessibility to the cellular machineries which require DNA as a template. Histones thereby play a central role in transcription regulation, DNA repair, DNA replication and chromosomal stability. DNA accessibility is regulated via a complex set of post-translational modifications of histones, also called histone code, and nucleosome remodeling. Required for checkpoint-mediated arrest of cell cycle progression in response to low doses of ionizing radiation and for efficient repair of DNA double strand breaks (DSBs) specifically when modified by C-terminal phosphorylation. The polypeptide is Histone H2AX (h2ax) (Xenopus laevis (African clawed frog)).